The primary structure comprises 317 residues: Methionyl-tRNA formyltransferase (317 aa).

110–113 (SLLP) contributes to the (6S)-5,6,7,8-tetrahydrofolate binding site.

Belongs to the Fmt family.

The catalysed reaction is L-methionyl-tRNA(fMet) + (6R)-10-formyltetrahydrofolate = N-formyl-L-methionyl-tRNA(fMet) + (6S)-5,6,7,8-tetrahydrofolate + H(+). Attaches a formyl group to the free amino group of methionyl-tRNA(fMet). The formyl group appears to play a dual role in the initiator identity of N-formylmethionyl-tRNA by promoting its recognition by IF2 and preventing the misappropriation of this tRNA by the elongation apparatus. The polypeptide is Methionyl-tRNA formyltransferase (Bacillus pumilus (strain SAFR-032)).